The sequence spans 54 residues: Large ribosomal subunit protein eL37 (54 aa).

Positions 20, 23, 35, and 38 each coordinate Zn(2+). The segment at 20-38 (CRRCGHHTYNVRTKRCSHC) adopts a C4-type zinc-finger fold.

It belongs to the eukaryotic ribosomal protein eL37 family. Zn(2+) serves as cofactor.

Its function is as follows. Binds to the 23S rRNA. The polypeptide is Large ribosomal subunit protein eL37 (rpl37e) (Thermoplasma acidophilum (strain ATCC 25905 / DSM 1728 / JCM 9062 / NBRC 15155 / AMRC-C165)).